The chain runs to 182 residues: MTSNQKAILAGGCFWGLQDLIRNQPGVVSTRVGYSGGNIPNATYRNHGTHAEAVEIIFDPTVTDYRTLLEFFFQIHDPTTKDRQGNDRGTSYRSAIFYFDEQQKRIALDTIADVEASGLWPGKVVTEVSPAGDFWEAEPEHQDYLQRYPNGYTCHFVRPGWRLPRRTAESALRASLSPELGT.

C13 is a catalytic residue.

This sequence belongs to the MsrA Met sulfoxide reductase family.

The enzyme catalyses L-methionyl-[protein] + [thioredoxin]-disulfide + H2O = L-methionyl-(S)-S-oxide-[protein] + [thioredoxin]-dithiol. It catalyses the reaction [thioredoxin]-disulfide + L-methionine + H2O = L-methionine (S)-S-oxide + [thioredoxin]-dithiol. Functionally, has an important function as a repair enzyme for proteins that have been inactivated by oxidation. Catalyzes the reversible oxidation-reduction of methionine sulfoxide in proteins to methionine. In Mycobacterium bovis (strain ATCC BAA-935 / AF2122/97), this protein is Peptide methionine sulfoxide reductase MsrA.